The sequence spans 445 residues: tRNA(Ile)-lysidine synthase (445 aa).

Residue 30 to 35 (SGGLDS) participates in ATP binding.

Belongs to the tRNA(Ile)-lysidine synthase family.

The protein localises to the cytoplasm. The enzyme catalyses cytidine(34) in tRNA(Ile2) + L-lysine + ATP = lysidine(34) in tRNA(Ile2) + AMP + diphosphate + H(+). Its function is as follows. Ligates lysine onto the cytidine present at position 34 of the AUA codon-specific tRNA(Ile) that contains the anticodon CAU, in an ATP-dependent manner. Cytidine is converted to lysidine, thus changing the amino acid specificity of the tRNA from methionine to isoleucine. The polypeptide is tRNA(Ile)-lysidine synthase (Alkalilimnicola ehrlichii (strain ATCC BAA-1101 / DSM 17681 / MLHE-1)).